Reading from the N-terminus, the 569-residue chain is Vacuolar protein sorting-associated protein 53 B (569 aa).

Coiled coils occupy residues threonine 53–isoleucine 90, glutamine 125–glutamate 145, and lysine 295–glutamate 316.

It belongs to the VPS53 family. Component of the Golgi-associated retrograde protein (GARP) complex.

Its subcellular location is the cytoplasm. The protein localises to the golgi apparatus. The protein resides in the trans-Golgi network membrane. It is found in the endosome membrane. In terms of biological role, involved in retrograde transport from early and late endosomes to late Golgi, leading to the membrane fusion between late Golgi and endosomal vesicles. In Arabidopsis thaliana (Mouse-ear cress), this protein is Vacuolar protein sorting-associated protein 53 B.